Consider the following 117-residue polypeptide: uncharacterized protein (117 aa).

Its subcellular location is the cytoplasm. It localises to the nucleus. This is an uncharacterized protein from Saccharomyces cerevisiae (strain ATCC 204508 / S288c) (Baker's yeast).